Reading from the N-terminus, the 102-residue chain is MNGQNIRIRLKAFDHRILDASTKEIVSTAKRTGATIRGPIPLPTHIAKFTVNRSPHIDKKSREQFEMRTHKRVLDIVDPTPQTVDALMKLDLAAGVDVEIKL.

It belongs to the universal ribosomal protein uS10 family. In terms of assembly, part of the 30S ribosomal subunit.

In terms of biological role, involved in the binding of tRNA to the ribosomes. This chain is Small ribosomal subunit protein uS10, found in Methylobacterium radiotolerans (strain ATCC 27329 / DSM 1819 / JCM 2831 / NBRC 15690 / NCIMB 10815 / 0-1).